Here is an 86-residue protein sequence, read N- to C-terminus: Sodium channel neurotoxin MeuNaTxalpha-4 (86 aa).

Positions 1-19 are cleaved as a signal peptide; the sequence is MNYLILISFALLVITGVES. Residues 21-85 enclose the LCN-type CS-alpha/beta domain; that stretch reads RDAYIAKPHN…VPIRIPGKCH (65 aa). Disulfide bonds link cysteine 31/cysteine 84, cysteine 35/cysteine 57, cysteine 43/cysteine 67, and cysteine 47/cysteine 69. Position 86 (arginine 86) is a propeptide, removed by a carboxypeptidase.

This sequence belongs to the long (4 C-C) scorpion toxin superfamily. Sodium channel inhibitor family. Alpha subfamily. In terms of tissue distribution, expressed by the venom gland.

It is found in the secreted. Alpha toxins bind voltage-independently at site-3 of sodium channels (Nav) and inhibit the inactivation of the activated channels, thereby blocking neuronal transmission. This toxin inhibits inactivation of drosophila DmNav1 (EC(50)=130 nM). This chain is Sodium channel neurotoxin MeuNaTxalpha-4, found in Mesobuthus eupeus (Lesser Asian scorpion).